Consider the following 249-residue polypeptide: tRNA pseudouridine synthase A (249 aa).

D53 functions as the Nucleophile in the catalytic mechanism. Residue Y111 coordinates substrate.

The protein belongs to the tRNA pseudouridine synthase TruA family. Homodimer.

The enzyme catalyses uridine(38/39/40) in tRNA = pseudouridine(38/39/40) in tRNA. In terms of biological role, formation of pseudouridine at positions 38, 39 and 40 in the anticodon stem and loop of transfer RNAs. In Streptococcus equi subsp. zooepidemicus (strain MGCS10565), this protein is tRNA pseudouridine synthase A.